The chain runs to 259 residues: Adenosylcobinamide-GDP ribazoletransferase (259 aa).

A run of 7 helical transmembrane segments spans residues 41 to 61 (AAIW…AIVF), 67 to 87 (FGLA…IATG), 119 to 139 (IGAY…NVLS), 148 to 168 (LFAL…FMHL), 179 to 199 (AGAG…GAIP), 200 to 220 (LLLL…LLFA), and 237 to 257 (TIGA…SVAL).

The protein belongs to the CobS family. Requires Mg(2+) as cofactor.

It localises to the cell inner membrane. It catalyses the reaction alpha-ribazole + adenosylcob(III)inamide-GDP = adenosylcob(III)alamin + GMP + H(+). The catalysed reaction is alpha-ribazole 5'-phosphate + adenosylcob(III)inamide-GDP = adenosylcob(III)alamin 5'-phosphate + GMP + H(+). It functions in the pathway cofactor biosynthesis; adenosylcobalamin biosynthesis; adenosylcobalamin from cob(II)yrinate a,c-diamide: step 7/7. In terms of biological role, joins adenosylcobinamide-GDP and alpha-ribazole to generate adenosylcobalamin (Ado-cobalamin). Also synthesizes adenosylcobalamin 5'-phosphate from adenosylcobinamide-GDP and alpha-ribazole 5'-phosphate. This is Adenosylcobinamide-GDP ribazoletransferase from Mesorhizobium japonicum (strain LMG 29417 / CECT 9101 / MAFF 303099) (Mesorhizobium loti (strain MAFF 303099)).